The primary structure comprises 209 residues: Uracil phosphoribosyltransferase (209 aa).

5-phospho-alpha-D-ribose 1-diphosphate-binding positions include arginine 79, arginine 104, and 131–139 (DPMLATGGS). Uracil-binding positions include isoleucine 194 and 199-201 (GDA). Aspartate 200 is a binding site for 5-phospho-alpha-D-ribose 1-diphosphate.

The protein belongs to the UPRTase family. Mg(2+) serves as cofactor.

It catalyses the reaction UMP + diphosphate = 5-phospho-alpha-D-ribose 1-diphosphate + uracil. Its pathway is pyrimidine metabolism; UMP biosynthesis via salvage pathway; UMP from uracil: step 1/1. Its activity is regulated as follows. Allosterically activated by GTP. In terms of biological role, catalyzes the conversion of uracil and 5-phospho-alpha-D-ribose 1-diphosphate (PRPP) to UMP and diphosphate. The polypeptide is Uracil phosphoribosyltransferase (Pediococcus pentosaceus (strain ATCC 25745 / CCUG 21536 / LMG 10740 / 183-1w)).